The sequence spans 370 residues: L-lysine 4-hydroxylase (370 aa).

3 residues coordinate Fe cation: histidine 176, glutamate 178, and histidine 310.

It belongs to the clavaminate synthase family. Fe(2+) serves as cofactor.

It catalyses the reaction L-lysine + 2-oxoglutarate + O2 = (4R)-4-hydroxy-L-lysine + succinate + CO2. In terms of biological role, alpha-ketoglutarate-dependent dioxygenase that in vitro catalyzes the regio- and stereoselective hydroxylation of L-lysine, leading to (4R)-4-hydroxy-L-lysine. To a lesser extent, can also use (3S)-3-hydroxy-L-lysine as substrate, producing the dihydroxylated product (3R,4R)-3,4-hydroxy-L-lysine. Cannot use D-lysine or L-ornithine as substrate. This is L-lysine 4-hydroxylase from Flavobacterium johnsoniae (strain ATCC 17061 / DSM 2064 / JCM 8514 / BCRC 14874 / CCUG 350202 / NBRC 14942 / NCIMB 11054 / UW101) (Cytophaga johnsonae).